We begin with the raw amino-acid sequence, 780 residues long: MAPYSLLVTRLQKALGVRQYHVASVLCQRAKVAMSHFEPSEYIRYDLLEKNINIVRKRLNRPLTLSEKIVYGHLDDPANQEIERGKTYLRLRPDRVAMQDATAQMAMLQFISSGLPKVAVPSTIHCDHLIEAQVGGEKDLRRAKDINQEVYNFLATAGAKYGVGFWRPGSGIIHQIILENYAYPGVLLIGTDSHTPNGGGLGGICIGVGGADAVDVMAGIPWELKCPKVIGVKLTGSLSGWTSPKDVILKVAGILTVKGGTGAIVEYHGPGVDSISCTGMATICNMGAEIGATTSVFPYNHRMKKYLSKTGRTDIANLAEEFKDHLVPDPGCQYDQVIEINLNELKPHINGPFTPDLAHPVADVGTVAEKEGWPLDIRVGLIGSCTNSSYEDMGRSAAVAKQALAHGLKCKSQFTITPGSEQIRATIERDGYAQILRDVGGIVLANACGPCIGQWDRKDIKKGEKNTIVTSYNRNFTGRNDANPETHAFVTSPEIVTALAIAGTLKFNPETDFLTGKDGKKFKLEAPDADELPRSDFDPGQDTYQHPPKDSSGQRVDVSPTSQRLQLLEPFDKWDGKDLEDLQILIKVKGKCTTDHISAAGPWLKFRGHLDNISNNLLIGAINIENGKANSVRNAVTQEFGPVPDTARYYKKHGIRWVVIGDENYGEGSSREHAALEPRHLGGRAIITKSFARIHETNLKKQGLLPLTFADPSDYNKIHPVDKLTIQGLKDFAPGKPLKCVIKHPNGTQETILLNHTFNETQIEWFRAGSALNRMKELQQ.

The transit peptide at 1–27 (MAPYSLLVTRLQKALGVRQYHVASVLC) directs the protein to the mitochondrion. K31 bears the N6-succinyllysine mark. K50 carries the N6-acetyllysine; alternate modification. An N6-succinyllysine; alternate modification is found at K50. Position 99 (Q99) interacts with substrate. Residues K138 and K144 each carry the N6-acetyllysine; alternate modification. N6-succinyllysine; alternate occurs at positions 138 and 144. A substrate-binding site is contributed by 192-194 (DSH). K233 carries the post-translational modification N6-acetyllysine; alternate. K233 carries the N6-succinyllysine; alternate modification. C385 is a binding site for [4Fe-4S] cluster. K411 is subject to N6-succinyllysine. [4Fe-4S] cluster contacts are provided by C448 and C451. R474 and R479 together coordinate substrate. 2 positions are modified to N6-acetyllysine; alternate: K517 and K523. Residues K517 and K523 each carry the N6-succinyllysine; alternate modification. A compositionally biased stretch (basic and acidic residues) spans 524–537 (LEAPDADELPRSDF). Residues 524-560 (LEAPDADELPRSDFDPGQDTYQHPPKDSSGQRVDVSP) are disordered. At K549 the chain carries N6-succinyllysine. Residues 551–560 (SSGQRVDVSP) show a composition bias toward polar residues. Phosphoserine is present on S559. Position 573 is an N6-acetyllysine; alternate (K573). Position 573 is an N6-succinyllysine; alternate (K573). N6-succinyllysine occurs at positions 577 and 591. Residue K605 is modified to N6-acetyllysine; alternate. An N6-succinyllysine; alternate modification is found at K605. Residue R607 coordinates substrate. At K628 the chain carries N6-succinyllysine. Position 670 is a phosphoserine (S670). Residue 670–671 (SR) participates in substrate binding. At K689 the chain carries N6-succinyllysine. 2 positions are modified to N6-acetyllysine; alternate: K723 and K730. N6-succinyllysine; alternate occurs at positions 723 and 730. N6-acetyllysine is present on residues K736, K739, and K743.

The protein belongs to the aconitase/IPM isomerase family. In terms of assembly, monomer. It depends on [4Fe-4S] cluster as a cofactor. Post-translationally, forms covalent cross-links mediated by transglutaminase TGM2, between a glutamine and the epsilon-amino group of a lysine residue, forming homopolymers and heteropolymers.

It is found in the mitochondrion. The catalysed reaction is citrate = D-threo-isocitrate. The protein operates within carbohydrate metabolism; tricarboxylic acid cycle; isocitrate from oxaloacetate: step 2/2. Catalyzes the isomerization of citrate to isocitrate via cis-aconitate. This Mus musculus (Mouse) protein is Aconitate hydratase, mitochondrial (Aco2).